A 207-amino-acid chain; its full sequence is 3-isopropylmalate dehydratase small subunit (207 aa).

It belongs to the LeuD family. LeuD type 1 subfamily. In terms of assembly, heterodimer of LeuC and LeuD.

It catalyses the reaction (2R,3S)-3-isopropylmalate = (2S)-2-isopropylmalate. It functions in the pathway amino-acid biosynthesis; L-leucine biosynthesis; L-leucine from 3-methyl-2-oxobutanoate: step 2/4. Catalyzes the isomerization between 2-isopropylmalate and 3-isopropylmalate, via the formation of 2-isopropylmaleate. The polypeptide is 3-isopropylmalate dehydratase small subunit (Gluconacetobacter diazotrophicus (strain ATCC 49037 / DSM 5601 / CCUG 37298 / CIP 103539 / LMG 7603 / PAl5)).